The following is a 179-amino-acid chain: Large ribosomal subunit protein uL5 (179 aa).

This sequence belongs to the universal ribosomal protein uL5 family. In terms of assembly, part of the 50S ribosomal subunit; part of the 5S rRNA/L5/L18/L25 subcomplex. Contacts the 5S rRNA and the P site tRNA. Forms a bridge to the 30S subunit in the 70S ribosome.

Functionally, this is one of the proteins that bind and probably mediate the attachment of the 5S RNA into the large ribosomal subunit, where it forms part of the central protuberance. In the 70S ribosome it contacts protein S13 of the 30S subunit (bridge B1b), connecting the 2 subunits; this bridge is implicated in subunit movement. Contacts the P site tRNA; the 5S rRNA and some of its associated proteins might help stabilize positioning of ribosome-bound tRNAs. The polypeptide is Large ribosomal subunit protein uL5 (Erwinia tasmaniensis (strain DSM 17950 / CFBP 7177 / CIP 109463 / NCPPB 4357 / Et1/99)).